Reading from the N-terminus, the 156-residue chain is uncharacterized protein (156 aa).

It localises to the mitochondrion. This is an uncharacterized protein from Paramecium tetraurelia.